A 280-amino-acid polypeptide reads, in one-letter code: Pantothenate synthetase (280 aa).

Position 30 to 37 (30 to 37 (MGALHRGH)) interacts with ATP. His-37 functions as the Proton donor in the catalytic mechanism. Gln-61 is a (R)-pantoate binding site. Gln-61 provides a ligand contact to beta-alanine. 148–151 (GEKD) lines the ATP pocket. Gln-154 serves as a coordination point for (R)-pantoate. Residues Val-177 and 185 to 188 (LSSR) contribute to the ATP site.

This sequence belongs to the pantothenate synthetase family. As to quaternary structure, homodimer.

The protein localises to the cytoplasm. The enzyme catalyses (R)-pantoate + beta-alanine + ATP = (R)-pantothenate + AMP + diphosphate + H(+). It functions in the pathway cofactor biosynthesis; (R)-pantothenate biosynthesis; (R)-pantothenate from (R)-pantoate and beta-alanine: step 1/1. Catalyzes the condensation of pantoate with beta-alanine in an ATP-dependent reaction via a pantoyl-adenylate intermediate. In Azobacteroides pseudotrichonymphae genomovar. CFP2, this protein is Pantothenate synthetase.